Here is a 1257-residue protein sequence, read N- to C-terminus: Neurocan core protein (1257 aa).

The signal sequence occupies residues 1 to 22 (MGAESVWASGLLVLWLLLLVSG). The region spanning 37-157 (HMLKSGSGPI…EQDLVTLEVT (121 aa)) is the Ig-like V-type domain. Disulfide bonds link Cys-58–Cys-139, Cys-181–Cys-252, Cys-205–Cys-226, Cys-279–Cys-354, and Cys-303–Cys-324. A glycan (N-linked (GlcNAc...) asparagine) is linked at Asn-121. Link domains lie at 159–254 (VVFH…YCFA) and 258–356 (GGEV…YCFR). Asn-339 is a glycosylation site (N-linked (GlcNAc...) asparagine). Residues 361-391 (TPQRGDSEIPSSGDEGEIVSAEGPPAPELKP) are disordered. 2 O-linked (Xyl...) (chondroitin sulfate) serine glycosylation sites follow: Ser-380 and Ser-410. Positions 447 to 459 (SSTGVPSPSSLGV) are enriched in low complexity. 3 disordered regions span residues 447–493 (SSTG…FQQQ), 550–610 (GSLG…AVPS), and 683–707 (GAED…GSPE). The segment covering 464–473 (TTPSGTQVAP) has biased composition (polar residues). Over residues 569–580 (SPSTVPSTDSTP) the composition is skewed to low complexity. N-linked (GlcNAc...) asparagine glycosylation is present at Asn-737. The O-linked (Xyl...) (chondroitin sulfate) serine glycan is linked to Ser-944. The EGF-like 1 domain occupies 949–985 (PTDPCENNPCLHGGTCRTNGTMYGCSCDQGYAGENCE). 11 disulfide bridges follow: Cys-953–Cys-964, Cys-958–Cys-973, Cys-975–Cys-984, Cys-991–Cys-1002, Cys-996–Cys-1011, Cys-1013–Cys-1022, Cys-1029–Cys-1040, Cys-1057–Cys-1149, Cys-1125–Cys-1141, Cys-1156–Cys-1199, and Cys-1185–Cys-1212. An N-linked (GlcNAc...) asparagine glycan is attached at Asn-967. An EGF-like 2; calcium-binding domain is found at 987 to 1023 (DIDDCLCSPCENGGTCIDEVNGFICLCLPSYGGNLCE). In terms of domain architecture, C-type lectin spans 1025-1154 (DTEGCDRGWH…LPYVCKKGTV (130 aa)). Residues 1154–1214 (VLCGPPPAVE…WDRPQIVCTK (61 aa)) enclose the Sushi domain. An N-linked (GlcNAc...) asparagine glycan is attached at Asn-1164. The segment covering 1215-1244 (PRRSHRMRRHHHHPHRHHKPRKEHRKHKRH) has biased composition (basic residues). Positions 1215 to 1257 (PRRSHRMRRHHHHPHRHHKPRKEHRKHKRHPAEDWEKDEGDFC) are disordered.

This sequence belongs to the aggrecan/versican proteoglycan family. Two isoforms were found that probably arise by proteolytic processing. The large isoform is predominant in early postnatal brain, the small isoform is found in adult brain. In terms of processing, O-glycosylated; contains chondroitin sulfate. Early postnatal and adult brain; not expressed in kidney, lung, liver and muscle.

It is found in the secreted. Functionally, may modulate neuronal adhesion and neurite growth during development by binding to neural cell adhesion molecules (NG-CAM and N-CAM). Chondroitin sulfate proteoglycan; binds to hyaluronic acid. The sequence is that of Neurocan core protein (Ncan) from Rattus norvegicus (Rat).